A 316-amino-acid polypeptide reads, in one-letter code: NAC domain-containing protein 22 (316 aa).

Positions 17–170 constitute an NAC domain; sequence DLPGFRFHPT…DMVLCKIYRK (154 aa). A DNA-binding region spans residues 117–176; the sequence is IGLKKTLVFYQGRAPRGTKTDWVMNEYRLPDYGAARAAAPPPKEDMVLCKIYRKATPLKE. Residues 229–260 are disordered; the sequence is QSSSSSAAPSGSSSKNGGAGAPREAKKEEADV. A compositionally biased stretch (low complexity) spans 230-244; it reads SSSSSAAPSGSSSKN.

It localises to the nucleus. In terms of biological role, transcription activator that binds sequence-specific DNA motifs. Involved in stress response. Plays a positive role in drought and salt stress tolerance through the modulation of abscisic acid-mediated signaling. The polypeptide is NAC domain-containing protein 22 (Oryza sativa subsp. japonica (Rice)).